The chain runs to 331 residues: UDP-galactose/UDP-glucose transporter 3 (331 aa).

8 helical membrane passes run 11–31 (VLLLSFCVAGIWAAYIYQGIL), 49–69 (HLAFLNLAQNVICLVWSYIMI), 80–100 (APWWTYWSAGITNTIGPAMGI), 112–132 (VLAKSSKMIPVMLMGSLVYGI), 135–155 (TLPEYLCTFLVAGGVSMFALL), 170–190 (APLGYGLCFLNLAFDGFTNAT), 206–226 (IMLGMNLWGTIYNMVYMFGLP), and 245–265 (WDILMYCLCGAVGQNFIFLTI). The Di-lysine motif motif lies at 327 to 331 (KKKKA).

The protein belongs to the nucleotide-sugar transporter family. UDP-galactose:UMP antiporter (TC 2.A.7.11) subfamily. Mostly expressed in flowers, and, to a lower extent, in roots, stems and leaves.

The protein resides in the endoplasmic reticulum membrane. It localises to the golgi apparatus membrane. Its function is as follows. Essential sugar transporter required for the transport of UDP-glucose from the cytoplasm into the Golgi and the endoplasmic reticulum. Essential for pollen development and involved in embryo sac progress. This is UDP-galactose/UDP-glucose transporter 3 from Arabidopsis thaliana (Mouse-ear cress).